A 514-amino-acid chain; its full sequence is Contact site A protein (514 aa).

The first 19 residues, 1 to 19 (MKFLLVLIILYNILNSAHS), serve as a signal peptide directing secretion. The tract at residues 20-453 (APTITAVSNG…EATTSTTYTI (434 aa)) is globular. The 84-residue stretch at 21-104 (PTITAVSNGK…TGGNGLFKYT (84 aa)) folds into the IPT/TIG 1 domain. N-linked (GlcNAc...) asparagine glycosylation is found at Asn-128, Asn-137, Asn-207, Asn-294, and Asn-399. The 93-residue stretch at 191 to 283 (PTITSITPLA…NQQPITFTYN (93 aa)) folds into the IPT/TIG 2 domain. Low complexity-rich tracts occupy residues 446–475 (TTST…TATP) and 483–494 (STPEETEAPSSA). The tract at residues 446–494 (TTSTTYTIPDTPTPTDTATPSPTPTETATPSPTPKPTSTPEETEAPSSA) is disordered. Tandem repeats lie at residues 462-469 (TATPSPTP) and 472-479 (TATPSPTP). The 2 X 8 AA repeats, Pro-rich stretch occupies residues 462 to 479 (TATPSPTPTETATPSPTP). A lipid anchor (GPI-like-anchor amidated serine) is attached at Ser-492. A propeptide spans 493-514 (SATTLISPLSLIVIFISFVLLI) (removed in mature form).

Phosphorylated on serine and N-glycosylated with two types of oligosaccharide chains. In terms of processing, the GPI-like-anchor contains a phosphoceramide group, rather than a phosphatidyl group.

The protein resides in the cell membrane. Functionally, this cell-surface glycoprotein mediates cell-cell binding via homophilic interaction. This is Contact site A protein (csaA) from Dictyostelium discoideum (Social amoeba).